The following is a 448-amino-acid chain: Probable 3-ketoacyl-CoA thiolase (448 aa).

Cysteine 110 acts as the Acyl-thioester intermediate in catalysis. Catalysis depends on proton acceptor residues histidine 402 and cysteine 432.

The protein belongs to the thiolase-like superfamily. Thiolase family.

Its subcellular location is the mitochondrion. It catalyses the reaction an acyl-CoA + acetyl-CoA = a 3-oxoacyl-CoA + CoA. It participates in lipid metabolism; fatty acid beta-oxidation. Functionally, mitochondrial enzyme that catalyzes reactions of the mitochondrial beta-oxidation pathway. The protein is Probable 3-ketoacyl-CoA thiolase of Caenorhabditis elegans.